Here is a 151-residue protein sequence, read N- to C-terminus: 3-hydroxyacyl-[acyl-carrier-protein] dehydratase FabZ (151 aa).

His54 is an active-site residue.

This sequence belongs to the thioester dehydratase family. FabZ subfamily.

It is found in the cytoplasm. It carries out the reaction a (3R)-hydroxyacyl-[ACP] = a (2E)-enoyl-[ACP] + H2O. Functionally, involved in unsaturated fatty acids biosynthesis. Catalyzes the dehydration of short chain beta-hydroxyacyl-ACPs and long chain saturated and unsaturated beta-hydroxyacyl-ACPs. This is 3-hydroxyacyl-[acyl-carrier-protein] dehydratase FabZ from Cronobacter sakazakii (strain ATCC BAA-894) (Enterobacter sakazakii).